Reading from the N-terminus, the 482-residue chain is Uric acid transporter UacT (482 aa).

The Cytoplasmic segment spans residues 1–29; the sequence is MSAIDSQLPSSSGQDRPTDEVDRILSPGK. Residues 30-50 traverse the membrane as a helical segment; sequence LIILGLQHVLVMYAGAVAVPL. The Periplasmic segment spans residues 51-62; the sequence is MIGDRLGLSKEA. A helical membrane pass occupies residues 63–83; that stretch reads IAMLISSDLFCCGIVTLLQCI. Over 84 to 92 the chain is Cytoplasmic; it reads GIGRFMGIR. The chain crosses the membrane as a helical span at residues 93 to 113; that stretch reads LPVIMSVTFAAVTPMIAIGMN. Over 114-115 the chain is Periplasmic; it reads PD. Residues 116-136 traverse the membrane as a helical segment; sequence IGLLGIFGATIAAGFITTLLA. Topologically, residues 137 to 142 are cytoplasmic; it reads PLIGRL. A helical transmembrane segment spans residues 143–163; the sequence is MPLFPPLVTGVVITSIGLSII. Residues 164–178 are Periplasmic-facing; sequence QVGIDWAAGGKGNPQ. Residues 179–199 traverse the membrane as a helical segment; that stretch reads YGNPVYLGISFAVLIFILLIT. Residues 200-204 lie on the Cytoplasmic side of the membrane; sequence RYAKG. The helical transmembrane segment at 205 to 225 threads the bilayer; it reads FMSNVAVLLGIVFGFLLSWMM. At 226–261 the chain is on the periplasmic side; sequence NEVNLSGLHDASWFAIVTPMSFGMPIFDPVSILTMT. A helical transmembrane segment spans residues 262–282; it reads AVLIIVFIESMGMFLALGEIV. Residues 283–337 are Cytoplasmic-facing; that stretch reads GRKLSSHDIIRGLRVDGVGTMIGGTFNSFPHTSFSQNVGLVSVTRVHSRWVCISS. The helical transmembrane segment at 338–358 threads the bilayer; the sequence is GIILILFGMVPKMAVLVASIP. Residue Q359 is a topological domain, periplasmic. A helical membrane pass occupies residues 360–380; it reads FVLGGAGLVMFGMVLATGIRI. Residues 381–392 are Cytoplasmic-facing; the sequence is LSRCNYTTNRYN. A helical membrane pass occupies residues 393–413; it reads LYIVAISLGVGMTPTLSHDFF. Residues 414–421 lie on the Periplasmic side of the membrane; that stretch reads SKLPAVLQ. The chain crosses the membrane as a helical span at residues 422–442; that stretch reads PLLHSGIMLATLSAVVLNVFF. At 443–482 the chain is on the cytoplasmic side; that stretch reads NGYQHHADLVKESVSDKDLKVRTVRMWLLMRKLKKNEHGE.

Belongs to the nucleobase:cation symporter-2 (NCS2) (TC 2.A.40) family.

The protein localises to the cell inner membrane. Inhibited in the presence of the protonophore carbonyl cyanide m-chlorophenyl hydrazone. In terms of biological role, proton-dependent high-capacity transporter for uric acid. Also shows a low capacity for transport of xanthine at 37 degrees Celsius but not at 25 degrees Celsius. The chain is Uric acid transporter UacT (uacT) from Escherichia coli (strain K12).